Here is a 652-residue protein sequence, read N- to C-terminus: Gametogenetin (652 aa).

5 disordered regions span residues 1–39, 52–237, 251–273, 291–473, and 488–576; these read MGNLQSEPSAGGGSRKVQPSDRAPDSRRTSLVEPEMTSQ, PGSA…DSES, PSLAPPAASSSLAAKASLGGGGG, QGPL…GHKE, and LAAD…GAAN. 2 stretches are compositionally biased toward basic and acidic residues: residues 18-30 and 124-133; these read QPSDRAPDSRRTS and RLLEASHRGQ. The segment at 123-486 is interaction with GGNBP1; the sequence is RRLLEASHRG…APTAAPALPP (364 aa). Composition is skewed to pro residues over residues 138 to 149 and 163 to 178; these read SLRPLKPPPPPR and QFPPPLETWKPPPPLP. A compositionally biased stretch (polar residues) spans 201–212; that stretch reads ESQAGPRNQGQT. 3 stretches are compositionally biased toward low complexity: residues 213–230, 251–267, and 299–312; these read AGRARGGAPPHAGEGEMA, PSLAPPAASSSLAAKAS, and ARPLGEVSRGAQEA. Serine 389 carries the post-translational modification Phosphoserine. Residues 407–422 are compositionally biased toward low complexity; the sequence is APALLAPPTFIFPAPT. Pro residues-rich tracts occupy residues 428-466 and 495-513; these read RPGPPGLQELPPLPPPTPPPTLQPPALQPTPLPVAPPLT and APSPAPAPTVAEPSPPVSA. The interactions with ZNF403/GGNBP2 and OAZ3 stretch occupies residues 491–652; sequence DQAPAPSPAP…HYDLQATHSN (162 aa). Residues 523-532 are compositionally biased toward basic residues; that stretch reads TRTRRNKGSR. Residues 538 to 552 show a composition bias toward basic and acidic residues; the sequence is TRKDGLHGDGPRERA.

In terms of assembly, interacts with FANCL, GGNBP1 and ZNF403/GGNBP2.

In terms of biological role, may be involved in spermatogenesis. The polypeptide is Gametogenetin (GGN) (Homo sapiens (Human)).